The sequence spans 259 residues: Putative deoxyribonuclease TATDN1 homolog (259 aa).

Residues Glu-82, His-116, His-138, and Asp-186 each contribute to the a divalent metal cation site.

It belongs to the metallo-dependent hydrolases superfamily. TatD-type hydrolase family. A divalent metal cation is required as a cofactor.

The protein resides in the nucleus. In terms of biological role, putative deoxyribonuclease. This is Putative deoxyribonuclease TATDN1 homolog from Vairimorpha ceranae (strain BRL01) (Microsporidian parasite).